The chain runs to 150 residues: 1,4-dihydroxy-2-naphthoyl-CoA hydrolase (150 aa).

D19 is an active-site residue.

This sequence belongs to the 4-hydroxybenzoyl-CoA thioesterase family. DHNA-CoA hydrolase subfamily.

It carries out the reaction 1,4-dihydroxy-2-naphthoyl-CoA + H2O = 1,4-dihydroxy-2-naphthoate + CoA + H(+). It functions in the pathway cofactor biosynthesis; phylloquinone biosynthesis. The protein operates within quinol/quinone metabolism; 1,4-dihydroxy-2-naphthoate biosynthesis; 1,4-dihydroxy-2-naphthoate from chorismate: step 7/7. Its function is as follows. Catalyzes the hydrolysis of 1,4-dihydroxy-2-naphthoyl-CoA (DHNA-CoA) to 1,4-dihydroxy-2-naphthoate (DHNA), a reaction involved in phylloquinone (vitamin K1) biosynthesis. This Prochlorococcus marinus subsp. pastoris (strain CCMP1986 / NIES-2087 / MED4) protein is 1,4-dihydroxy-2-naphthoyl-CoA hydrolase.